The sequence spans 479 residues: MAAGVAARTLRGLAVAGGGETSDSEDDGWEIGYLDRAAQKLKGPLPTEEKNETFKKALTTGDILLVKELLNSGISVDSSFRYGWTPLMYAASVSNVELVRVLLDRGANASFDKDKQTILITACSARGSEEQILKCVELLLSRNADPNVPCRRLMTPIMYAARDGHTQVVALLVAHGAEVNTQDENGYTALTWAARQGHKNVVLKLLELGANKMLQTKDGKTPSEIAKRNKHVEIFSFLSLTLNPLEGKLQQLTKEETICKLLTTDSDKEKDNIFSSYTALGDLEIFLHGLGLEHMTDLLKERDITLRHLLTMKKDEFTKNGITSRDQQKILDALKELQVDEIKFGELPEVTKLEISGDEFLNFLLKLNKQCRHLITAVQNIITELPVNSHKIVLEWASPRNFTSVCEELISNVEDLNEEVCKLKDLIQKLQNERENDPTHIPLIEEVSTWNSGILKRTALAVCGFGFLLFICKLTFQRK.

Ser-22 and Ser-24 each carry phosphoserine. ANK repeat units follow at residues 49–78 (EKNE…SVDS), 82–111 (YGWT…NASF), 114–148 (DKQT…DPNV), 152–181 (RLMT…EVNT), 185–214 (NGYT…NKML), and 218–247 (DGKT…PLEG). Residues 276–338 (SYTALGDLEI…KILDALKELQ (63 aa)) enclose the SAM domain.

Interacts with DDX4, PIWIL1, RANBP9 and TDRD1.

It is found in the cytoplasm. In terms of biological role, plays a central role during spermatogenesis by repressing transposable elements and preventing their mobilization, which is essential for the germline integrity. Acts via the piRNA metabolic process, which mediates the repression of transposable elements during meiosis by forming complexes composed of piRNAs and Piwi proteins and governs the methylation and subsequent repression of transposons. Its association with pi-bodies suggests a participation in the primary piRNAs metabolic process. Required prior to the pachytene stage to facilitate the production of multiple types of piRNAs, including those associated with repeats involved in the regulation of retrotransposons. May act by mediating protein-protein interactions during germ cell maturation. In Rhinolophus ferrumequinum (Greater horseshoe bat), this protein is Ankyrin repeat, SAM and basic leucine zipper domain-containing protein 1 (ASZ1).